The chain runs to 612 residues: MDKTVSQRLGQGTLHQKLKRIMEKSTILSNWTKESEEKMKFDFSCELYRMSTYSAFPRGVPVSERSLARAGFYYTGVNDKVKCFCCGLMLDNWKQGDSPVEKHRQFYPSCSFVQTLLSASLQSPSKNMSPVKSRFAHSSPLERGGIHSNLCSSPLNSRAVEDFSSRMDPCSYAMSTEEARFLTYSMWPLSFLSPAELARAGFYYIGPGDRVACFACGGKLSNWEPKDDAMSEHRRHFPHCPFLENTSETQRFSISNLSMQTHSARLRTFLYWPPSVPVQPEQLASAGFYYVDRNDDVKCFCCDGGLRCWEPGDDPWIEHAKWFPRCEFLIRMKGQEFVDEIQARYPHLLEQLLSTSDTPGEENADPTETVVHFGPGESSEDVVMMSTPVVKAALEMGFSRSLVRQTVQRQILATGENYRTVNDIVSVLLNAEDERREEEKERQTEEMASGDLSLIRKNRMALFQQLTHVLPILDNLLEASVITKQEHDIIRQKTQIPLQARELIDTVLVKGNAAANIFKNSLKEIDSTLYENLFVEKNMKYIPTEDVSGLSLEEQLRRLQEERTCKVCMDREVSIVFIPCGHLVVCQECAPSLRKCPICRGTIKGTVRTFLS.

One copy of the BIR 1 repeat lies at 46–113 (ELYRMSTYSA…RQFYPSCSFV (68 aa)). The residue at position 143 (R143) is an Omega-N-methylarginine. S153 carries the post-translational modification Phosphoserine. BIR repeat units follow at residues 177–243 (EEAR…CPFL) and 262–329 (HSAR…CEFL). Residues C299, C302, H319, and C326 each coordinate Zn(2+). The 91-residue stretch at 447–537 (MASGDLSLIR…TLYENLFVEK (91 aa)) folds into the CARD domain. The RING-type zinc-finger motif lies at 565-600 (CKVCMDREVSIVFIPCGHLVVCQECAPSLRKCPICR).

The protein belongs to the IAP family. In terms of assembly, interacts with DIABLO/SMAC and with PRSS25; these interactions inhibit apoptotic suppressor activity. Interacts with CASP9. Interacts (via BIR domains) with TRAF2; the interaction is required for IKBKE ubiquitination. Interacts with E2F1, RIPK1, RIPK2, RIPK3, RIPK4, BIRC5/survivin and USP19. Interacts with HSP90AB1. Interacts with several death receptors, inclusing FAS, TNFRSF10A and TNFRSF10B. Recruited to TNFRSF10B in the absence of receptor stimulation. When TNFRSF10B is stimulated, further recruited to the receptor and cleaved by caspases. Proteolytic fragments remain associated with TNFRSF10B. Post-translationally, auto-ubiquitinated and degraded by the proteasome in apoptotic cells. In terms of processing, upon stimulation of death receptors, including TNFRSF10B, recruited to receptors and cleaved by caspases. Proteolytic fragments remain associated with the receptors. This cleavage presumably inactivates the protein. Expressed in heart, brain, spleen, lung, liver, skeletal muscle, kidney and testis.

The protein resides in the cytoplasm. The protein localises to the nucleus. It catalyses the reaction S-ubiquitinyl-[E2 ubiquitin-conjugating enzyme]-L-cysteine + [acceptor protein]-L-lysine = [E2 ubiquitin-conjugating enzyme]-L-cysteine + N(6)-ubiquitinyl-[acceptor protein]-L-lysine.. The CARD domain inhibits the activation of E3 ubiquitin ligase activity by preventing RING domain dimerization and E2 ubiquitin donor binding and activation. The CARD domain-mediated autoinhibition of the E3 ubiquitin-protein ligase activity suppresses cell proliferation and migration. USP19 regulates the stability of BIRC2/c-IAP1 by preventing its ubiquitination. Its function is as follows. Multi-functional protein which regulates not only caspases and apoptosis, but also modulates inflammatory signaling and immunity, mitogenic kinase signaling, and cell proliferation, as well as cell invasion and metastasis. Acts as an E3 ubiquitin-protein ligase regulating NF-kappa-B signaling and regulates both canonical and non-canonical NF-kappa-B signaling by acting in opposite directions: acts as a positive regulator of the canonical pathway and suppresses constitutive activation of non-canonical NF-kappa-B signaling. The target proteins for its E3 ubiquitin-protein ligase activity include: RIPK1, RIPK2, RIPK3, RIPK4, CASP3, CASP7, CASP8, TRAF2, DIABLO/SMAC, MAP3K14/NIK, MAP3K5/ASK1, IKBKG/NEMO, IKBKE and MXD1/MAD1. Can also function as an E3 ubiquitin-protein ligase of the NEDD8 conjugation pathway, targeting effector caspases for neddylation and inactivation. Acts as an important regulator of innate immune signaling via regulation of Toll-like receptors (TLRs), Nodlike receptors (NLRs) and RIG-I like receptors (RLRs), collectively referred to as pattern recognition receptors (PRRs). Protects cells from spontaneous formation of the ripoptosome, a large multi-protein complex that has the capability to kill cancer cells in a caspase-dependent and caspase-independent manner. Suppresses ripoptosome formation by ubiquitinating RIPK1 and CASP8. Can stimulate the transcriptional activity of E2F1. Plays a role in the modulation of the cell cycle. This Mus musculus (Mouse) protein is Baculoviral IAP repeat-containing protein 2 (Birc2).